The sequence spans 293 residues: Ribosomal RNA small subunit methyltransferase H (293 aa).

S-adenosyl-L-methionine is bound by residues 32-34 (GGH), aspartate 51, phenylalanine 78, aspartate 99, and glutamine 106. A disordered region spans residues 274-293 (DEIRENPASRSAKMRVARRL).

It belongs to the methyltransferase superfamily. RsmH family.

The protein localises to the cytoplasm. The enzyme catalyses cytidine(1402) in 16S rRNA + S-adenosyl-L-methionine = N(4)-methylcytidine(1402) in 16S rRNA + S-adenosyl-L-homocysteine + H(+). Specifically methylates the N4 position of cytidine in position 1402 (C1402) of 16S rRNA. The protein is Ribosomal RNA small subunit methyltransferase H of Sulfurihydrogenibium azorense (strain DSM 15241 / OCM 825 / Az-Fu1).